The chain runs to 694 residues: Soluble starch synthase 2-2, chloroplastic/amyloplastic (694 aa).

The transit peptide at 1-15 (MSGAIASSPAATLFL) directs the protein to the chloroplast. The segment at 93 to 197 (KADHVEDSVS…DSENKESGPL (105 aa)) is disordered. The span at 127–142 (APVSKPKVDPSVPASK) shows a compositional bias: low complexity. Residues 156-176 (AALDKKEDVGVAEPLEAKADA) show a composition bias toward basic and acidic residues. Residues 177-186 (GGDAGAVSSA) are compositionally biased toward low complexity. ADP-alpha-D-glucose is bound at residue lysine 217.

The protein belongs to the glycosyltransferase 1 family. Bacterial/plant glycogen synthase subfamily. In terms of tissue distribution, expressed in leaves and weakly in endosperm and roots.

It is found in the plastid. Its subcellular location is the amyloplast. The protein resides in the chloroplast. It catalyses the reaction [(1-&gt;4)-alpha-D-glucosyl](n) + ADP-alpha-D-glucose = [(1-&gt;4)-alpha-D-glucosyl](n+1) + ADP + H(+). Its pathway is glycan biosynthesis; starch biosynthesis. In terms of biological role, may contribute to the deposition of transient starch in chloroplasts of leaves. The chain is Soluble starch synthase 2-2, chloroplastic/amyloplastic (SSII-2) from Oryza sativa subsp. japonica (Rice).